The following is a 957-amino-acid chain: Glycine dehydrogenase (decarboxylating) (957 aa).

At Lys-708 the chain carries N6-(pyridoxal phosphate)lysine.

The protein belongs to the GcvP family. The glycine cleavage system is composed of four proteins: P, T, L and H. The cofactor is pyridoxal 5'-phosphate.

The catalysed reaction is N(6)-[(R)-lipoyl]-L-lysyl-[glycine-cleavage complex H protein] + glycine + H(+) = N(6)-[(R)-S(8)-aminomethyldihydrolipoyl]-L-lysyl-[glycine-cleavage complex H protein] + CO2. The glycine cleavage system catalyzes the degradation of glycine. The P protein binds the alpha-amino group of glycine through its pyridoxal phosphate cofactor; CO(2) is released and the remaining methylamine moiety is then transferred to the lipoamide cofactor of the H protein. The sequence is that of Glycine dehydrogenase (decarboxylating) from Salmonella dublin (strain CT_02021853).